The sequence spans 335 residues: Cell division protein ZipA (335 aa).

The Periplasmic portion of the chain corresponds to 1 to 6 (MENLQL). A helical membrane pass occupies residues 7-27 (VLFVLGAVAIIAVLVHGFWSI). Residues 28-335 (RRQQPKSLKE…SYLQRIRAQM (308 aa)) are Cytoplasmic-facing. 2 disordered regions span residues 37–128 (ESPM…NEEV) and 163–185 (RPAP…VSVE). A compositionally biased stretch (low complexity) spans 170-185 (APQSVAPASVEPVSVE).

The protein belongs to the ZipA family. Interacts with FtsZ via their C-terminal domains.

It localises to the cell inner membrane. In terms of biological role, essential cell division protein that stabilizes the FtsZ protofilaments by cross-linking them and that serves as a cytoplasmic membrane anchor for the Z ring. Also required for the recruitment to the septal ring of downstream cell division proteins. The protein is Cell division protein ZipA of Shewanella loihica (strain ATCC BAA-1088 / PV-4).